Consider the following 432-residue polypeptide: Glutamate-1-semialdehyde 2,1-aminomutase (432 aa).

At Lys-272 the chain carries N6-(pyridoxal phosphate)lysine.

Belongs to the class-III pyridoxal-phosphate-dependent aminotransferase family. HemL subfamily. In terms of assembly, homodimer. Pyridoxal 5'-phosphate is required as a cofactor.

The protein localises to the cytoplasm. The catalysed reaction is (S)-4-amino-5-oxopentanoate = 5-aminolevulinate. It participates in porphyrin-containing compound metabolism; protoporphyrin-IX biosynthesis; 5-aminolevulinate from L-glutamyl-tRNA(Glu): step 2/2. The protein operates within porphyrin-containing compound metabolism; chlorophyll biosynthesis. In Nostoc punctiforme (strain ATCC 29133 / PCC 73102), this protein is Glutamate-1-semialdehyde 2,1-aminomutase.